A 280-amino-acid polypeptide reads, in one-letter code: H-2 class II histocompatibility antigen gamma chain (280 aa).

Over 1–30 (MDDQRDLISNHEQLPILGQRARAPESNCNR) the chain is Cytoplasmic. Ser-9 is subject to Phosphoserine. Residues 31-56 (GVLYTSVSVLVALLLAGQATTAYFLY) form a helical; Signal-anchor for type II membrane protein membrane-spanning segment. The Extracellular segment spans residues 57–280 (QQQGRLDKLT…TKQDMGQMFL (224 aa)). Asn-114 and Asn-120 each carry an N-linked (GlcNAc...) asparagine glycan. Residues 194-255 (LTKCQEEVSH…HTKSRGRHNC (62 aa)) form the Thyroglobulin type-1 domain. 3 cysteine pairs are disulfide-bonded: Cys-197/Cys-216, Cys-227/Cys-234, and Cys-236/Cys-255. Residues 246–268 (HTKSRGRHNCSEPLDMEDPSSGL) form a disordered region. A glycan (O-linked (Xyl...) (chondroitin sulfate) serine) is linked at Ser-266.

Nonamer composed of three alpha/beta/gamma heterotrimers. Interacts with CD44; this complex is essential for the MIF-induced signaling cascade that results in B cell survival. As to quaternary structure, interacts with the mature form of CTSL; the complex survive in neutral pH environment.

The protein localises to the late endosome. Its subcellular location is the lysosome. The protein resides in the cell membrane. It is found in the endoplasmic reticulum membrane. It localises to the golgi apparatus. The protein localises to the trans-Golgi network. Its subcellular location is the endosome. The protein resides in the secreted. Its function is as follows. Plays a critical role in MHC class II antigen processing by stabilizing peptide-free class II alpha/beta heterodimers in a complex soon after their synthesis and directing transport of the complex from the endoplasmic reticulum to compartments where peptide loading of class II takes place. Enhance also the stimulation of T-cell responses through interaction with CD44. In terms of biological role, binds to the peptide-binding site of MHC class II alpha/beta heterodimers forming an alpha-beta-CLIP complex, thereby preventing the loading of antigenic peptides to the MHC class II complex until its release by HLA-DM in the endosome. Stabilizes the conformation of mature CTSL by binding to its active site and serving as a chaperone to help maintain a pool of mature enzyme in endocytic compartments and extracellular space of antigen-presenting cells (APCs). The chain is H-2 class II histocompatibility antigen gamma chain from Rattus norvegicus (Rat).